The chain runs to 222 residues: Large ribosomal subunit protein uL4 (222 aa).

The disordered stretch occupies residues 50-72; it reads TRGRSEVSHSTRKPFRQKGTGNA.

It belongs to the universal ribosomal protein uL4 family. As to quaternary structure, part of the 50S ribosomal subunit.

Functionally, one of the primary rRNA binding proteins, this protein initially binds near the 5'-end of the 23S rRNA. It is important during the early stages of 50S assembly. It makes multiple contacts with different domains of the 23S rRNA in the assembled 50S subunit and ribosome. Forms part of the polypeptide exit tunnel. The sequence is that of Large ribosomal subunit protein uL4 from Chlamydia muridarum (strain MoPn / Nigg).